Here is a 422-residue protein sequence, read N- to C-terminus: MYDFVIIGGGIIGMSTAMQLIDVYPDARIALLEKESGPACHQTGHNSGVIHAGVYYTPGSLKAQFCLAGNRATKAFCDQNGIRYDNCGKMLVATSELEMERMRALWERTAANGIEREWLNAEELREREPNITGLGGIFVPSSGIVSYREVTAAMAKIFQARGGEIIYNAEVSGLSEHKNGVVIRTRQGGEYEASTLISCSGLMADRLVKMLGLEPGFIICPFRGEYFRLAPEHNQIVNHLIYPIPDPAMPFLGVHLTRMIDGSVTVGPNAVLAFKREGYRKRDFSFSDTLEILGSSGIRRVLQNHLRSGLGEMKNSLCKSGYLRLVQKYCPRLSLSDLQPWPAGVRAQAVSPDGKLIDDFLFVTTPRTIHTCNAPSPAATSAIPIGAHIVSKVQTLLASQSNPGRTLRAARSVDALHAAFNQ.

The protein belongs to the L2HGDH family. Requires FAD as cofactor.

It localises to the cell inner membrane. The catalysed reaction is (S)-2-hydroxyglutarate + a quinone = a quinol + 2-oxoglutarate. It functions in the pathway amino-acid degradation. Its function is as follows. Catalyzes the dehydrogenation of L-2-hydroxyglutarate (L2HG) to alpha-ketoglutarate and couples to the respiratory chain by feeding electrons from the reaction into the membrane quinone pool. Functions in a L-lysine degradation pathway that proceeds via cadaverine, glutarate and L-2-hydroxyglutarate. Also displays some oxidase activity in vitro on L-2-hydroxyglutarate with O2 as the electron acceptor, but this activity is most likely not physiological. The polypeptide is L-2-hydroxyglutarate dehydrogenase (Escherichia coli O17:K52:H18 (strain UMN026 / ExPEC)).